A 191-amino-acid polypeptide reads, in one-letter code: Glycerol-3-phosphate acyltransferase (191 aa).

5 helical membrane passes run 5-25 (IILI…IAKI), 51-71 (LAVL…YTAQ), 78-98 (DLYI…PIWL), 114-134 (IALN…VFFI), and 153-173 (SFFF…LIFL).

The protein belongs to the PlsY family. Probably interacts with PlsX.

It localises to the cell membrane. It catalyses the reaction an acyl phosphate + sn-glycerol 3-phosphate = a 1-acyl-sn-glycero-3-phosphate + phosphate. It participates in lipid metabolism; phospholipid metabolism. Functionally, catalyzes the transfer of an acyl group from acyl-phosphate (acyl-PO(4)) to glycerol-3-phosphate (G3P) to form lysophosphatidic acid (LPA). This enzyme utilizes acyl-phosphate as fatty acyl donor, but not acyl-CoA or acyl-ACP. The polypeptide is Glycerol-3-phosphate acyltransferase (Wolbachia pipientis subsp. Culex pipiens (strain wPip)).